A 333-amino-acid chain; its full sequence is Adenosine deaminase (333 aa).

Positions 12 and 14 each coordinate Zn(2+). Residues histidine 14, aspartate 16, and glycine 170 each contribute to the substrate site. Histidine 197 contributes to the Zn(2+) binding site. The Proton donor role is filled by glutamate 200. Aspartate 278 provides a ligand contact to Zn(2+). Residue aspartate 279 participates in substrate binding.

The protein belongs to the metallo-dependent hydrolases superfamily. Adenosine and AMP deaminases family. Adenosine deaminase subfamily. It depends on Zn(2+) as a cofactor.

The catalysed reaction is adenosine + H2O + H(+) = inosine + NH4(+). It catalyses the reaction 2'-deoxyadenosine + H2O + H(+) = 2'-deoxyinosine + NH4(+). In terms of biological role, catalyzes the hydrolytic deamination of adenosine and 2-deoxyadenosine. This Escherichia coli O45:K1 (strain S88 / ExPEC) protein is Adenosine deaminase.